Reading from the N-terminus, the 159-residue chain is UPF0262 protein TM1040_3562 (159 aa).

Residues 1–21 (MSRISQIELDDRNLPPPTPEI) are disordered.

Belongs to the UPF0262 family.

The chain is UPF0262 protein TM1040_3562 from Ruegeria sp. (strain TM1040) (Silicibacter sp.).